Here is a 305-residue protein sequence, read N- to C-terminus: Serine/threonine-protein phosphatase ppe1 (305 aa).

Mn(2+)-binding residues include aspartate 51, histidine 53, aspartate 79, and asparagine 111. Catalysis depends on histidine 112, which acts as the Proton donor. The Mn(2+) site is built by histidine 161 and histidine 235.

This sequence belongs to the PPP phosphatase family. PP-6 (PP-V) subfamily. In terms of assembly, interacts with sts5, ekc1 and mis12. The cofactor is Mn(2+).

It localises to the nucleus. It catalyses the reaction O-phospho-L-seryl-[protein] + H2O = L-seryl-[protein] + phosphate. It carries out the reaction O-phospho-L-threonyl-[protein] + H2O = L-threonyl-[protein] + phosphate. Functionally, has a role in chromosome segregation. May provide a dynamic connection between kinetochore microtubules and kinetochore chromatin. Negatively regulates mis12. The chain is Serine/threonine-protein phosphatase ppe1 (ppe1) from Schizosaccharomyces pombe (strain 972 / ATCC 24843) (Fission yeast).